Here is a 569-residue protein sequence, read N- to C-terminus: Dihydroxy-acid dehydratase (569 aa).

Asp-80 contacts Mg(2+). Position 121 (Cys-121) interacts with [2Fe-2S] cluster. Residues Asp-122 and Lys-123 each coordinate Mg(2+). N6-carboxylysine is present on Lys-123. Position 194 (Cys-194) interacts with [2Fe-2S] cluster. Glu-446 is a Mg(2+) binding site. Ser-472 functions as the Proton acceptor in the catalytic mechanism.

The protein belongs to the IlvD/Edd family. As to quaternary structure, homodimer. [2Fe-2S] cluster serves as cofactor. The cofactor is Mg(2+).

It catalyses the reaction (2R)-2,3-dihydroxy-3-methylbutanoate = 3-methyl-2-oxobutanoate + H2O. The enzyme catalyses (2R,3R)-2,3-dihydroxy-3-methylpentanoate = (S)-3-methyl-2-oxopentanoate + H2O. Its pathway is amino-acid biosynthesis; L-isoleucine biosynthesis; L-isoleucine from 2-oxobutanoate: step 3/4. The protein operates within amino-acid biosynthesis; L-valine biosynthesis; L-valine from pyruvate: step 3/4. In terms of biological role, functions in the biosynthesis of branched-chain amino acids. Catalyzes the dehydration of (2R,3R)-2,3-dihydroxy-3-methylpentanoate (2,3-dihydroxy-3-methylvalerate) into 2-oxo-3-methylpentanoate (2-oxo-3-methylvalerate) and of (2R)-2,3-dihydroxy-3-methylbutanoate (2,3-dihydroxyisovalerate) into 2-oxo-3-methylbutanoate (2-oxoisovalerate), the penultimate precursor to L-isoleucine and L-valine, respectively. This Desulforudis audaxviator (strain MP104C) protein is Dihydroxy-acid dehydratase.